A 97-amino-acid chain; its full sequence is HssA/B-like protein 27 (97 aa).

This sequence belongs to the hssA/B family.

This is HssA/B-like protein 27 (hssl27) from Dictyostelium discoideum (Social amoeba).